Reading from the N-terminus, the 527-residue chain is Berberine bridge enzyme-like 8 (527 aa).

A signal peptide spans 1-20 (MKYALILVLFFVVFIWQSSS). The cysteines at positions 31 and 93 are disulfide-linked. N-linked (GlcNAc...) asparagine glycans are attached at residues N51 and N68. Residues 71–247 (STPKPFLIIA…LAYKINLVEV (177 aa)) enclose the FAD-binding PCMH-type domain. The 6-(S-cysteinyl)-8alpha-(pros-histidyl)-FAD (His-Cys) cross-link spans 108 to 172 (HDYDGLSYVT…KTLAYPAGIC (65 aa)). 3 N-linked (GlcNAc...) asparagine glycosylation sites follow: N250, N263, and N292.

Belongs to the oxygen-dependent FAD-linked oxidoreductase family. Requires FAD as cofactor. In terms of processing, the FAD cofactor is bound via a bicovalent 6-S-cysteinyl, 8alpha-N1-histidyl FAD linkage.

It localises to the secreted. The protein localises to the cell wall. The polypeptide is Berberine bridge enzyme-like 8 (Arabidopsis thaliana (Mouse-ear cress)).